We begin with the raw amino-acid sequence, 129 residues long: Small ribosomal subunit protein uS11 (129 aa).

It belongs to the universal ribosomal protein uS11 family. In terms of assembly, part of the 30S ribosomal subunit. Interacts with proteins S7 and S18. Binds to IF-3.

Located on the platform of the 30S subunit, it bridges several disparate RNA helices of the 16S rRNA. Forms part of the Shine-Dalgarno cleft in the 70S ribosome. This is Small ribosomal subunit protein uS11 from Oceanobacillus iheyensis (strain DSM 14371 / CIP 107618 / JCM 11309 / KCTC 3954 / HTE831).